Here is a 42-residue protein sequence, read N- to C-terminus: Photosystem II reaction center protein J (42 aa).

The chain crosses the membrane as a helical span at residues 10 to 30 (IPLWIIGTLAGTLVIGLLAIF).

Belongs to the PsbJ family. PSII is composed of 1 copy each of membrane proteins PsbA, PsbB, PsbC, PsbD, PsbE, PsbF, PsbH, PsbI, PsbJ, PsbK, PsbL, PsbM, PsbT, PsbX, PsbY, PsbZ, Psb30/Ycf12, at least 3 peripheral proteins of the oxygen-evolving complex and a large number of cofactors. It forms dimeric complexes.

The protein localises to the plastid. It is found in the chloroplast thylakoid membrane. Functionally, one of the components of the core complex of photosystem II (PSII). PSII is a light-driven water:plastoquinone oxidoreductase that uses light energy to abstract electrons from H(2)O, generating O(2) and a proton gradient subsequently used for ATP formation. It consists of a core antenna complex that captures photons, and an electron transfer chain that converts photonic excitation into a charge separation. The protein is Photosystem II reaction center protein J of Chaetosphaeridium globosum (Charophycean green alga).